A 248-amino-acid chain; its full sequence is 3-deoxy-manno-octulosonate cytidylyltransferase (248 aa).

The protein belongs to the KdsB family.

It localises to the cytoplasm. The catalysed reaction is 3-deoxy-alpha-D-manno-oct-2-ulosonate + CTP = CMP-3-deoxy-beta-D-manno-octulosonate + diphosphate. It functions in the pathway nucleotide-sugar biosynthesis; CMP-3-deoxy-D-manno-octulosonate biosynthesis; CMP-3-deoxy-D-manno-octulosonate from 3-deoxy-D-manno-octulosonate and CTP: step 1/1. Its pathway is bacterial outer membrane biogenesis; lipopolysaccharide biosynthesis. In terms of biological role, activates KDO (a required 8-carbon sugar) for incorporation into bacterial lipopolysaccharide in Gram-negative bacteria. This is 3-deoxy-manno-octulosonate cytidylyltransferase from Salmonella agona (strain SL483).